The primary structure comprises 475 residues: ATP-dependent protease ATPase subunit HslU1 (475 aa).

The N-terminal 27 residues, 1–27, are a transit peptide targeting the mitochondrion; it reads MMRRVTSSLPSALKLGRSLGPNVRFSG. ATP is bound by residues I66, 108 to 113, D286, E353, and R425; that span reads GVGKTE.

This sequence belongs to the ClpX chaperone family. HslU subfamily. A double ring-shaped homohexamer of HslV is capped on each side by a ring-shaped HslU homohexamer. The assembly of the HslU/HslV complex (HslVU) is dependent on binding of ATP.

Its subcellular location is the mitochondrion matrix. It is found in the kinetoplast. Its function is as follows. ATPase subunit of a proteasome-like degradation complex; this subunit has chaperone activity. The binding of ATP and its subsequent hydrolysis by HslU are essential for unfolding of protein substrates subsequently hydrolyzed by HslV. HslU recognizes the N-terminal part of its protein substrates and unfolds these before they are guided to HslV for hydrolysis. The HslVU protease complex functions in mitochondrial DNA replication by regulating DNA helicase PIF2 protein levels. The sequence is that of ATP-dependent protease ATPase subunit HslU1 (HslU1) from Trypanosoma brucei brucei (strain 927/4 GUTat10.1).